The primary structure comprises 564 residues: Dihydroxy-acid dehydratase (564 aa).

Basic residues predominate over residues 1–10; it reads MTDTRTKRRM. Positions 1–23 are disordered; sequence MTDTRTKRRMNWNSHHITQGDER. Cys57 lines the [2Fe-2S] cluster pocket. Position 89 (Asp89) interacts with Mg(2+). Cys130 provides a ligand contact to [2Fe-2S] cluster. Mg(2+) contacts are provided by Asp131 and Lys132. Lys132 carries the post-translational modification N6-carboxylysine. A [2Fe-2S] cluster-binding site is contributed by Cys202. Residue Glu454 coordinates Mg(2+). The active-site Proton acceptor is Ser480.

The protein belongs to the IlvD/Edd family. As to quaternary structure, homodimer. [2Fe-2S] cluster serves as cofactor. The cofactor is Mg(2+).

The catalysed reaction is (2R)-2,3-dihydroxy-3-methylbutanoate = 3-methyl-2-oxobutanoate + H2O. It carries out the reaction (2R,3R)-2,3-dihydroxy-3-methylpentanoate = (S)-3-methyl-2-oxopentanoate + H2O. The protein operates within amino-acid biosynthesis; L-isoleucine biosynthesis; L-isoleucine from 2-oxobutanoate: step 3/4. It functions in the pathway amino-acid biosynthesis; L-valine biosynthesis; L-valine from pyruvate: step 3/4. Functions in the biosynthesis of branched-chain amino acids. Catalyzes the dehydration of (2R,3R)-2,3-dihydroxy-3-methylpentanoate (2,3-dihydroxy-3-methylvalerate) into 2-oxo-3-methylpentanoate (2-oxo-3-methylvalerate) and of (2R)-2,3-dihydroxy-3-methylbutanoate (2,3-dihydroxyisovalerate) into 2-oxo-3-methylbutanoate (2-oxoisovalerate), the penultimate precursor to L-isoleucine and L-valine, respectively. In Deinococcus geothermalis (strain DSM 11300 / CIP 105573 / AG-3a), this protein is Dihydroxy-acid dehydratase.